Here is a 372-residue protein sequence, read N- to C-terminus: GTPase Obg (372 aa).

An Obg domain is found at 1 to 159 (MAFVDEAKFF…KWLLIELKLM (159 aa)). The interval 121–141 (GSGGMGNPHFSSGSNRTPRVA) is disordered. Positions 160 to 329 (ADVGLVGLPN…LVKLIGDIID (170 aa)) constitute an OBG-type G domain. Residues 166-173 (GLPNAGKS), 191-195 (FTTLE), 213-216 (DIPG), 280-283 (NKCD), and 310-312 (SAI) contribute to the GTP site. The Mg(2+) site is built by Ser-173 and Thr-193. The segment at 346 to 372 (QDLKKQKEEERRQELKKQKEEEQAKDE) is disordered.

This sequence belongs to the TRAFAC class OBG-HflX-like GTPase superfamily. OBG GTPase family. In terms of assembly, monomer. Requires Mg(2+) as cofactor.

The protein resides in the cytoplasm. In terms of biological role, an essential GTPase which binds GTP, GDP and possibly (p)ppGpp with moderate affinity, with high nucleotide exchange rates and a fairly low GTP hydrolysis rate. Plays a role in control of the cell cycle, stress response, ribosome biogenesis and in those bacteria that undergo differentiation, in morphogenesis control. The sequence is that of GTPase Obg from Desulfotalea psychrophila (strain LSv54 / DSM 12343).